We begin with the raw amino-acid sequence, 234 residues long: Phosphoribosylaminoimidazole-succinocarboxamide synthase (234 aa).

The protein belongs to the SAICAR synthetase family.

The enzyme catalyses 5-amino-1-(5-phospho-D-ribosyl)imidazole-4-carboxylate + L-aspartate + ATP = (2S)-2-[5-amino-1-(5-phospho-beta-D-ribosyl)imidazole-4-carboxamido]succinate + ADP + phosphate + 2 H(+). It participates in purine metabolism; IMP biosynthesis via de novo pathway; 5-amino-1-(5-phospho-D-ribosyl)imidazole-4-carboxamide from 5-amino-1-(5-phospho-D-ribosyl)imidazole-4-carboxylate: step 1/2. This is Phosphoribosylaminoimidazole-succinocarboxamide synthase from Streptococcus uberis (strain ATCC BAA-854 / 0140J).